The following is a 227-amino-acid chain: NAD(P)H-hydrate epimerase (227 aa).

One can recognise a YjeF N-terminal domain in the interval M10–L227. Residue N62–D66 participates in (6S)-NADPHX binding. Residues N63 and D142 each coordinate K(+). (6S)-NADPHX-binding positions include G146–P152 and D176. A K(+)-binding site is contributed by S179.

This sequence belongs to the NnrE/AIBP family. K(+) serves as cofactor.

It catalyses the reaction (6R)-NADHX = (6S)-NADHX. The catalysed reaction is (6R)-NADPHX = (6S)-NADPHX. Its function is as follows. Catalyzes the epimerization of the S- and R-forms of NAD(P)HX, a damaged form of NAD(P)H that is a result of enzymatic or heat-dependent hydration. This is a prerequisite for the S-specific NAD(P)H-hydrate dehydratase to allow the repair of both epimers of NAD(P)HX. The protein is NAD(P)H-hydrate epimerase of Roseobacter litoralis (strain ATCC 49566 / DSM 6996 / JCM 21268 / NBRC 15278 / OCh 149).